Reading from the N-terminus, the 527-residue chain is Exodeoxyribonuclease 7 large subunit (527 aa).

The interval alanine 499–phenylalanine 527 is disordered.

It belongs to the XseA family. Heterooligomer composed of large and small subunits.

The protein localises to the cytoplasm. The enzyme catalyses Exonucleolytic cleavage in either 5'- to 3'- or 3'- to 5'-direction to yield nucleoside 5'-phosphates.. In terms of biological role, bidirectionally degrades single-stranded DNA into large acid-insoluble oligonucleotides, which are then degraded further into small acid-soluble oligonucleotides. The polypeptide is Exodeoxyribonuclease 7 large subunit (Sinorhizobium fredii (strain NBRC 101917 / NGR234)).